We begin with the raw amino-acid sequence, 262 residues long: Global transcriptional regulator CodY (262 aa).

Residues 1–159 (MAHLLEKTRK…SSTVVGIQLL (159 aa)) form a GAF domain region. The segment at residues 207–226 (ASVIADRIGITRSVIVNALR) is a DNA-binding region (H-T-H motif).

It belongs to the CodY family.

The protein resides in the cytoplasm. In terms of biological role, DNA-binding global transcriptional regulator which is involved in the adaptive response to starvation and acts by directly or indirectly controlling the expression of numerous genes in response to nutrient availability. During rapid exponential growth, CodY is highly active and represses genes whose products allow adaptation to nutrient depletion. In Streptococcus gordonii (strain Challis / ATCC 35105 / BCRC 15272 / CH1 / DL1 / V288), this protein is Global transcriptional regulator CodY.